The following is a 275-amino-acid chain: Biotin synthase (275 aa).

The 217-residue stretch at 1–217 folds into the Radical SAM core domain; the sequence is MLCAICNVSS…DTAKTLPQCR (217 aa). [4Fe-4S] cluster-binding residues include C13, C17, and C20. The [2Fe-2S] cluster site is built by C57, C92, C150, and R217.

Belongs to the radical SAM superfamily. Biotin synthase family. As to quaternary structure, homodimer. [4Fe-4S] cluster serves as cofactor. [2Fe-2S] cluster is required as a cofactor.

The enzyme catalyses (4R,5S)-dethiobiotin + (sulfur carrier)-SH + 2 reduced [2Fe-2S]-[ferredoxin] + 2 S-adenosyl-L-methionine = (sulfur carrier)-H + biotin + 2 5'-deoxyadenosine + 2 L-methionine + 2 oxidized [2Fe-2S]-[ferredoxin]. The protein operates within cofactor biosynthesis; biotin biosynthesis; biotin from 7,8-diaminononanoate: step 2/2. Catalyzes the conversion of dethiobiotin (DTB) to biotin by the insertion of a sulfur atom into dethiobiotin via a radical-based mechanism. In Campylobacter fetus subsp. fetus (strain 82-40), this protein is Biotin synthase.